Consider the following 335-residue polypeptide: Glyceraldehyde-3-phosphate dehydrogenase (335 aa).

Residues 12–13 (RI), D34, and R79 each bind NAD(+). Residues 150–152 (SCT), T181, 210–211 (TG), and R233 each bind D-glyceraldehyde 3-phosphate. Residue C151 is the Nucleophile of the active site. An NAD(+)-binding site is contributed by N315.

The protein belongs to the glyceraldehyde-3-phosphate dehydrogenase family. In terms of assembly, homotetramer.

It is found in the cytoplasm. The enzyme catalyses D-glyceraldehyde 3-phosphate + phosphate + NAD(+) = (2R)-3-phospho-glyceroyl phosphate + NADH + H(+). Its pathway is carbohydrate degradation; glycolysis; pyruvate from D-glyceraldehyde 3-phosphate: step 1/5. This is Glyceraldehyde-3-phosphate dehydrogenase (GPD) from Ogataea parapolymorpha (strain ATCC 26012 / BCRC 20466 / JCM 22074 / NRRL Y-7560 / DL-1) (Yeast).